The chain runs to 284 residues: Four and a half LIM domains protein 5 (284 aa).

The C4-type zinc-finger motif lies at 8–32; that stretch reads CQYCTASLLGKKYVLKDDNLYCISC. LIM zinc-binding domains lie at 39–100, 101–160, 161–220, and 221–283; these read NYCE…ECSS, KCFH…KEFA, HYCN…LYAK, and KCAA…ADTD.

Interacts with CREM (via the third LIM domain). Interacts (via second LIM domain) with SPAG8.

The protein resides in the nucleus. In terms of biological role, may be involved in the regulation of spermatogenesis. Stimulates CREM transcriptional activity in a phosphorylation-independent manner. The chain is Four and a half LIM domains protein 5 (Fhl5) from Rattus norvegicus (Rat).